The chain runs to 132 residues: Small ribosomal subunit protein uS8 (132 aa).

The protein belongs to the universal ribosomal protein uS8 family. In terms of assembly, part of the 30S ribosomal subunit. Contacts proteins S5 and S12.

One of the primary rRNA binding proteins, it binds directly to 16S rRNA central domain where it helps coordinate assembly of the platform of the 30S subunit. The protein is Small ribosomal subunit protein uS8 of Desulforamulus reducens (strain ATCC BAA-1160 / DSM 100696 / MI-1) (Desulfotomaculum reducens).